Reading from the N-terminus, the 804-residue chain is Leucine--tRNA ligase (804 aa).

The short motif at 39–50 (PYPSGAGLHVGH) is the 'HIGH' region element. The 'KMSKS' region motif lies at 580–584 (KMSKS). Lysine 583 contributes to the ATP binding site.

It belongs to the class-I aminoacyl-tRNA synthetase family.

It is found in the cytoplasm. It catalyses the reaction tRNA(Leu) + L-leucine + ATP = L-leucyl-tRNA(Leu) + AMP + diphosphate. In Mycoplasma mycoides subsp. mycoides SC (strain CCUG 32753 / NCTC 10114 / PG1), this protein is Leucine--tRNA ligase.